Consider the following 271-residue polypeptide: Thioredoxin-related transmembrane protein 2 homolog (271 aa).

Positions 1-28 are cleaved as a signal peptide; that stretch reads MTWKKQMALLAKPYYWVNILLAISYLLA. Over 29 to 102 the chain is Extracellular; that stretch reads KKTQFICTRL…AILWAYADFR (74 aa). Residues 103–123 form a helical membrane-spanning segment; it reads YGLGFLLLCVLVGMVLPEPSY. The region spanning 112–262 is the Thioredoxin domain; that stretch reads VLVGMVLPEP…YKEAIERLPI (151 aa). Residues 124–271 lie on the Cytoplasmic side of the membrane; the sequence is RGPEHITYFR…IAPKEAKKVQ (148 aa). The short motif at 268–271 is the Di-lysine motif element; sequence KKVQ.

Its subcellular location is the membrane. The sequence is that of Thioredoxin-related transmembrane protein 2 homolog from Drosophila melanogaster (Fruit fly).